The sequence spans 494 residues: Monocarboxylate transporter 1 (494 aa).

The Cytoplasmic portion of the chain corresponds to 1-22; it reads MPPAIGGPVGYTPPDGGWGWAV. A helical membrane pass occupies residues 23–44; that stretch reads VVGAFISIGFSYAFPKSITVFF. Position 38 (Lys38) interacts with (S)-lactate. Residues 45 to 55 lie on the Extracellular side of the membrane; sequence KEIEIIFSATT. The helical transmembrane segment at 56-80 threads the bilayer; the sequence is SEVSWISSIMLAVMYAGGPISSILV. Topologically, residues 81–84 are cytoplasmic; that stretch reads NKYG. The helical transmembrane segment at 85-105 threads the bilayer; sequence SRPVMIAGGCLSGCGLIAASF. Residues 106-109 are Extracellular-facing; sequence CNTV. A helical transmembrane segment spans residues 110-132; the sequence is QELYFCIGVIGGLGLAFNLNPAL. At 133-146 the chain is on the cytoplasmic side; the sequence is TMIGKYFYKKRPLA. A helical membrane pass occupies residues 147–169; the sequence is NGLAMAGSPVFLSTLAPLNQAFF. Residues 170–174 lie on the Extracellular side of the membrane; the sequence is GIFGW. Residues 175–194 traverse the membrane as a helical segment; the sequence is RGSFLILGGLLLNCCVAGSL. At 195–254 the chain is on the cytoplasmic side; sequence MRPIGPQQGKVEKLKSKESLQEAGKSDANTDLIGGSPKGEKLSVFQTVNKFLDLSLFTHR. Phosphoserine occurs at positions 210, 213, and 220. Thr224 carries the post-translational modification Phosphothreonine. Ser230 carries the phosphoserine modification. A helical transmembrane segment spans residues 255–281; sequence GFLLYLSGNVVMFFGLFTPLVFLSNYG. Over 282–288 the chain is Extracellular; it reads KSKHFSS. Residues 289 to 310 form a helical membrane-spanning segment; that stretch reads EKSAFLLSILAFVDMVARPSMG. Asp302 contacts H(+). (S)-lactate is bound at residue Arg306. At 311–321 the chain is on the cytoplasmic side; it reads LAANTRWIRPR. Residues 322 to 342 form a helical membrane-spanning segment; it reads VQYFFAASVVANGVCHLLAPL. Over 343–346 the chain is Extracellular; sequence STTY. A helical transmembrane segment spans residues 347–368; sequence VGFCIYAGVFGFAFGWLSSVLF. Topologically, residues 369–382 are cytoplasmic; sequence ETLMDLVGPQRFSS. A helical membrane pass occupies residues 383–403; it reads AVGLVTIVECCPVLLGPPLLG. Residues 404–414 lie on the Extracellular side of the membrane; it reads RLNDMYGDYKY. The helical transmembrane segment at 415–436 threads the bilayer; the sequence is TYWACGVILIIAGLYLFIGMGI. The Cytoplasmic segment spans residues 437-494; it reads NYRLVAKEQKAEEKKRDGKEDETSTDVDEKPKKTMKETQSPAPLQNSSGDPAEEESPV. Positions 446-472 are enriched in basic and acidic residues; sequence KAEEKKRDGKEDETSTDVDEKPKKTMK. The tract at residues 446–494 is disordered; the sequence is KAEEKKRDGKEDETSTDVDEKPKKTMKETQSPAPLQNSSGDPAEEESPV. Thr459 carries the post-translational modification Phosphothreonine. Ser460 carries the phosphoserine modification. A Phosphothreonine modification is found at Thr461. The segment covering 473 to 485 has biased composition (polar residues); the sequence is ETQSPAPLQNSSG. Phosphoserine is present on residues Ser476, Ser483, Ser484, and Ser492.

Belongs to the major facilitator superfamily. Monocarboxylate porter (TC 2.A.1.13) family. In terms of assembly, interacts with BSG. Interacts with EMB. Interaction with either BSG or EMB is required for expression at the cell membrane. In terms of tissue distribution, detected in erythrocytes (at protein level). Detected in brain, heart, kidney, lung, muscle, jejunum enterocytes and brain capillaries.

It is found in the cell membrane. It localises to the basolateral cell membrane. The protein localises to the apical cell membrane. The catalysed reaction is (S)-lactate(in) + H(+)(in) = (S)-lactate(out) + H(+)(out). The enzyme catalyses pyruvate(out) + H(+)(out) = pyruvate(in) + H(+)(in). It carries out the reaction acetoacetate(out) + H(+)(out) = acetoacetate(in) + H(+)(in). It catalyses the reaction (S)-3-hydroxybutanoate(out) + H(+)(out) = (S)-3-hydroxybutanoate(in) + H(+)(in). The catalysed reaction is (R)-3-hydroxybutanoate(out) + H(+)(out) = (R)-3-hydroxybutanoate(in) + H(+)(in). The enzyme catalyses 3-methyl-2-oxobutanoate(out) + H(+)(out) = 3-methyl-2-oxobutanoate(in) + H(+)(in). It carries out the reaction 4-methyl-2-oxopentanoate(out) + H(+)(out) = 4-methyl-2-oxopentanoate(in) + H(+)(in). With respect to regulation, inhibited by stilbene disulfonates, such as di-isothiocyanostilbene disulfonate(DIDS), a cross-linking reagent that forms covalent linkages with lysine groups. In terms of biological role, bidirectional proton-coupled monocarboxylate transporter. Catalyzes the rapid transport across the plasma membrane of many monocarboxylates such as lactate, pyruvate, acetate and the ketone bodies acetoacetate and beta-hydroxybutyrate, and thus contributes to the maintenance of intracellular pH. The transport direction is determined by the proton motive force and the concentration gradient of the substrate monocarboxylate. MCT1 is a major lactate exporter. Plays a role in cellular responses to a high-fat diet by modulating the cellular levels of lactate and pyruvate that contribute to the regulation of central metabolic pathways and insulin secretion, with concomitant effects on plasma insulin levels and blood glucose homeostasis. Facilitates the protonated monocarboxylate form of succinate export, that its transient protonation upon muscle cell acidification in exercising muscle and ischemic heart. Functions via alternate outward- and inward-open conformation states. Protonation and deprotonation of 302-Asp is essential for the conformational transition. This chain is Monocarboxylate transporter 1 (Slc16a1), found in Rattus norvegicus (Rat).